Consider the following 445-residue polypeptide: Putative ubiquitin carboxyl-terminal hydrolase L293 (445 aa).

Residues 133-441 enclose the USP domain; that stretch reads KALANFGNSC…SAYIILYGDI (309 aa). Cysteine 142 serves as the catalytic Nucleophile. Histidine 384 (proton acceptor) is an active-site residue.

This sequence belongs to the peptidase C19 family.

Its subcellular location is the virion. The catalysed reaction is Thiol-dependent hydrolysis of ester, thioester, amide, peptide and isopeptide bonds formed by the C-terminal Gly of ubiquitin (a 76-residue protein attached to proteins as an intracellular targeting signal).. This chain is Putative ubiquitin carboxyl-terminal hydrolase L293, found in Acanthamoeba polyphaga mimivirus (APMV).